Here is a 70-residue protein sequence, read N- to C-terminus: Conotoxin Cl6.13 (70 aa).

Residues methionine 1–aspartate 21 form the signal peptide. Residues alanine 22 to valine 33 constitute a propeptide that is removed on maturation. Disulfide bonds link cysteine 41–cysteine 58, cysteine 48–cysteine 63, and cysteine 57–cysteine 68.

In terms of tissue distribution, expressed by the venom duct.

Its subcellular location is the secreted. The sequence is that of Conotoxin Cl6.13 from Californiconus californicus (California cone).